A 565-amino-acid chain; its full sequence is VFLSMRNKTQLAKRRATNYETHRNSSRTSSPIVCSTGMPIIFVATEVHPWCKTGGLGDVVGGLPPALAAMGHRVMTIAPRYDQYKDTWDTNVLVEVIVGDRTETVRFFHCYKRGVDRVFVDHPMFLEKVWGKTGSKLYGPTTGTDFRDNQLRFCLLCLAALEAPRVLNLNNSEYFSGPYGENVVFVANDWHTAVLPCYLKSMYKQNGIYENAKVAFCIHNIAYQGRFPRADFELLNLPESFMPSFDFVDGHVKPVVGRKINWMKAGITECDVVLTVSPHYVKELTSGPEKGVELDGVLRTKPLETGIVNGMDVIDWNPATDKYISVKYNATTVAQARALNKEILQAEVGLSVDSSIPVIVFIGRLEEQKGSDILIAASPEFVEENVQIIVLGTGKKKMEEELMLLEVKYPQNARGIAKFNVPLAHMMFAGADFIIIPSRFEPCGLIQLQGMSYGVVPICSSTGGLVDTVREGVTGFHMGSFNVEFETVDPTDVAAVGSNVTRALKQYRTPVFHAMVQNCMAQDLSWKGPAKKWEEALLSLGVEGSQPGIEGEEIAPLAKQNVATP.

Residues 1 to 34 constitute a chloroplast transit peptide; it reads VFLSMRNKTQLAKRRATNYETHRNSSRTSSPIVC. Lys52 provides a ligand contact to ADP-alpha-D-glucose.

This sequence belongs to the glycosyltransferase 1 family. Bacterial/plant glycogen synthase subfamily.

Its subcellular location is the plastid. The protein resides in the chloroplast. It localises to the amyloplast. It carries out the reaction an NDP-alpha-D-glucose + [(1-&gt;4)-alpha-D-glucosyl](n) = [(1-&gt;4)-alpha-D-glucosyl](n+1) + a ribonucleoside 5'-diphosphate + H(+). It functions in the pathway glycan biosynthesis; starch biosynthesis. Its function is as follows. Involved in the synthesis of amylose in endosperm. This is Granule-bound starch synthase 1b, chloroplastic/amyloplastic from Hordeum vulgare (Barley).